A 291-amino-acid chain; its full sequence is Nucleotide-binding protein Cthe_0113 (291 aa).

8–15 (GISGAGKS) contacts ATP. 59 to 62 (DIRG) serves as a coordination point for GTP.

It belongs to the RapZ-like family.

Functionally, displays ATPase and GTPase activities. This Acetivibrio thermocellus (strain ATCC 27405 / DSM 1237 / JCM 9322 / NBRC 103400 / NCIMB 10682 / NRRL B-4536 / VPI 7372) (Clostridium thermocellum) protein is Nucleotide-binding protein Cthe_0113.